The chain runs to 169 residues: Cell division inhibitor SulA (169 aa).

A ftsZ binding region spans residues 106–112 (ALRTGNY). Residues 162–169 (KIHSNLYH) form a lon protease binding region.

Belongs to the SulA family. Interacts with FtsZ. In terms of processing, is rapidly cleaved and degraded by the Lon protease once DNA damage is repaired.

Component of the SOS system and an inhibitor of cell division. Accumulation of SulA causes rapid cessation of cell division and the appearance of long, non-septate filaments. In the presence of GTP, binds a polymerization-competent form of FtsZ in a 1:1 ratio, thus inhibiting FtsZ polymerization and therefore preventing it from participating in the assembly of the Z ring. This mechanism prevents the premature segregation of damaged DNA to daughter cells during cell division. This Shigella boydii serotype 18 (strain CDC 3083-94 / BS512) protein is Cell division inhibitor SulA.